Consider the following 238-residue polypeptide: ATP synthase subunit a (238 aa).

5 helical membrane-spanning segments follow: residues 18–38 (LTLL…VFWA), 76–96 (YSLL…LGLF), 114–134 (NLAF…IEGV), 166–186 (SLAI…GLIV), and 193–213 (VYWW…SVFI).

It belongs to the ATPase A chain family. F-type ATPases have 2 components, CF(1) - the catalytic core - and CF(0) - the membrane proton channel. CF(1) has five subunits: alpha(3), beta(3), gamma(1), delta(1), epsilon(1). CF(0) has three main subunits: a(1), b(2) and c(9-12). The alpha and beta chains form an alternating ring which encloses part of the gamma chain. CF(1) is attached to CF(0) by a central stalk formed by the gamma and epsilon chains, while a peripheral stalk is formed by the delta and b chains.

The protein localises to the cell membrane. Functionally, key component of the proton channel; it plays a direct role in the translocation of protons across the membrane. The polypeptide is ATP synthase subunit a (Streptococcus pyogenes serotype M1).